A 352-amino-acid chain; its full sequence is B1 bradykinin receptor (352 aa).

Over 1–41 (MASWPPLELQSSNQSQLFPQNATACDNAPEAWDLLHRVLPT) the chain is Extracellular. N-linked (GlcNAc...) asparagine glycans are attached at residues asparagine 13 and asparagine 21. A helical transmembrane segment spans residues 42–62 (FIISICSFGLLGNLFVLLVFL). At 63–72 (LPRRRLNVAE) the chain is on the cytoplasmic side. The chain crosses the membrane as a helical span at residues 73-93 (IYLANLAASDLVFVLGLPFWA). Residues 94–110 (ENIWNQFNWPFGALLCR) are Extracellular-facing. Cysteines 109 and 188 form a disulfide. The helical transmembrane segment at 111–131 (VINGIIKANLFISIFLVVAIS) threads the bilayer. Over 132–153 (QDRYCVLVHPMASRRRQRRRQA) the chain is Cytoplasmic. Residues 154–174 (RVTCVLIWVVGGLLSIPTFLL) form a helical membrane-spanning segment. Residues 175–206 (RSIQAVPDLNITACILLLPHEAWHFARIVELN) are Extracellular-facing. The N-linked (GlcNAc...) asparagine glycan is linked to asparagine 184. Residues 207–227 (ILAFLLPLAAIIFFNYHILAS) traverse the membrane as a helical segment. At 228-250 (LRGREEVSRTRCGGSKDSKTTAL) the chain is on the cytoplasmic side. A helical membrane pass occupies residues 251–271 (ILTLVVAFLVCWAPYHFFAFL). The Extracellular portion of the chain corresponds to 272-294 (EFLFQVQAVRGCFWEDFIDLGLQ). Residues 295–315 (LANFLAFTNSSLNPVIYVFVG) traverse the membrane as a helical segment. Topologically, residues 316–352 (RLFRTKVWELYKQCTPKSLAPISSSHRKEIFQLFWRN) are cytoplasmic. Cysteine 329 is lipidated: S-palmitoyl cysteine.

It belongs to the G-protein coupled receptor 1 family. Bradykinin receptor subfamily. BDKRB1 sub-subfamily.

Its subcellular location is the cell membrane. In terms of biological role, this is a receptor for bradykinin. Could be a factor in chronic pain and inflammation. In Macaca mulatta (Rhesus macaque), this protein is B1 bradykinin receptor (BDKRB1).